A 178-amino-acid chain; its full sequence is Large ribosomal subunit protein uL10 (178 aa).

This sequence belongs to the universal ribosomal protein uL10 family. In terms of assembly, part of the ribosomal stalk of the 50S ribosomal subunit. The N-terminus interacts with L11 and the large rRNA to form the base of the stalk. The C-terminus forms an elongated spine to which L12 dimers bind in a sequential fashion forming a multimeric L10(L12)X complex.

Its function is as follows. Forms part of the ribosomal stalk, playing a central role in the interaction of the ribosome with GTP-bound translation factors. The chain is Large ribosomal subunit protein uL10 from Petrotoga mobilis (strain DSM 10674 / SJ95).